The primary structure comprises 211 residues: SOSS complex subunit B2 (211 aa).

Positions 27-97 (IVLEIGRVTK…TLYTGRGGDL (71 aa)) form a DNA-binding region, OB. Residues 125–211 (NQQNKTSKEQ…GRDPRRASKR (87 aa)) form a disordered region. Residues 136 to 157 (GNSPPNQNAGNGTVPVFSNNNA) show a composition bias toward polar residues. The segment covering 179 to 195 (NGPPPVTAGGTPAPPKP) has biased composition (pro residues).

This sequence belongs to the SOSS-B family. SOSS-B2 subfamily. As to quaternary structure, component of the SOSS complex, composed of soss-b (soss-b1/nabp2 or soss-b2/nabp1), soss-a/ints3 and soss-c/inip. SOSS complexes containing soss-b1/nabp2 are more abundant than complexes containing soss-b2/nabp1.

It is found in the nucleus. Component of the SOSS complex, a multiprotein complex that functions downstream of the MRN complex to promote DNA repair and G2/M checkpoint. In the SOSS complex, acts as a sensor of single-stranded DNA that binds to single-stranded DNA. The SOSS complex associates with DNA lesions and influences diverse endpoints in the cellular DNA damage response including cell-cycle checkpoint activation, recombinational repair and maintenance of genomic stability. Required for efficient homologous recombination-dependent repair of double-strand breaks (DSBs). This chain is SOSS complex subunit B2 (nabp1), found in Danio rerio (Zebrafish).